The chain runs to 448 residues: Tryptophan--tRNA ligase (448 aa).

ATP is bound by residues 10–12 (TPT) and 18–19 (GN). The 'HIGH' region signature appears at 11-19 (PTGTPHLGN). Asp143 serves as a coordination point for L-tryptophan. ATP-binding positions include 155-157 (GRD), Leu197, and 204-208 (KMSKS). The 'KMSKS' region signature appears at 204–208 (KMSKS).

It belongs to the class-I aminoacyl-tRNA synthetase family. Homodimer.

The protein localises to the cytoplasm. The enzyme catalyses tRNA(Trp) + L-tryptophan + ATP = L-tryptophyl-tRNA(Trp) + AMP + diphosphate + H(+). Functionally, catalyzes the attachment of tryptophan to tRNA(Trp). The polypeptide is Tryptophan--tRNA ligase (Pseudomonas aeruginosa (strain ATCC 15692 / DSM 22644 / CIP 104116 / JCM 14847 / LMG 12228 / 1C / PRS 101 / PAO1)).